The sequence spans 462 residues: Integrator complex subunit 12 (462 aa).

Positions 42 to 132 are disordered; it reads GIDSSYRPSQ…PETQSSPITV (91 aa). Residues 59–86 show a composition bias toward polar residues; it reads ISSTKNISIKQEPKISSSLPSGNNNGKV. K68 participates in a covalent cross-link: Glycyl lysine isopeptide (Lys-Gly) (interchain with G-Cter in SUMO2). The span at 88 to 124 shows a compositional bias: basic and acidic residues; the sequence is TTEKVKKEAEKRPADKMKSDITEGVDIPKKPRLEKPE. S128 carries the post-translational modification Phosphoserine. Residues 159–215 form a PHD-type zinc finger; that stretch reads GLACVVCRQMMVASGNQLVECQECHNLYHRDCHKPQVTDKEANDPRLVWYCARCTRQ. A Glycyl lysine isopeptide (Lys-Gly) (interchain with G-Cter in SUMO2) cross-link involves residue K254. Positions 301 to 328 are enriched in polar residues; the sequence is SSAGPSTAKLSSTTQNNTGKPATSSANQ. The tract at residues 301-462 is disordered; it reads SSAGPSTAKL…KKAAQKKLKK (162 aa). Low complexity-rich tracts occupy residues 347-358 and 382-437; these read KIGSNNSTTPTV and VSKV…GPTS. Over residues 449 to 462 the composition is skewed to basic residues; it reads QMVKKKAAQKKLKK.

Belongs to the Integrator subunit 12 family. As to quaternary structure, component of the Integrator complex, composed of core subunits INTS1, INTS2, INTS3, INTS4, INTS5, INTS6, INTS7, INTS8, INTS9/RC74, INTS10, INTS11/CPSF3L, INTS12, INTS13, INTS14 and INTS15. The core complex associates with protein phosphatase 2A subunits PPP2CA and PPP2R1A, to form the Integrator-PP2A (INTAC) complex. Post-translationally, dephosphorylated at Ser-128 by the PNUTS-PP1 complex, promoting RNA polymerase II transcription pause-release.

The protein resides in the nucleus. Functionally, component of the integrator complex, a multiprotein complex that terminates RNA polymerase II (Pol II) transcription in the promoter-proximal region of genes. The integrator complex provides a quality checkpoint during transcription elongation by driving premature transcription termination of transcripts that are unfavorably configured for transcriptional elongation: the complex terminates transcription by (1) catalyzing dephosphorylation of the C-terminal domain (CTD) of Pol II subunit POLR2A/RPB1 and SUPT5H/SPT5, (2) degrading the exiting nascent RNA transcript via endonuclease activity and (3) promoting the release of Pol II from bound DNA. The integrator complex is also involved in terminating the synthesis of non-coding Pol II transcripts, such as enhancer RNAs (eRNAs), small nuclear RNAs (snRNAs), telomerase RNAs and long non-coding RNAs (lncRNAs). Mediates recruitment of cytoplasmic dynein to the nuclear envelope, probably as component of the integrator complex. The sequence is that of Integrator complex subunit 12 from Homo sapiens (Human).